A 169-amino-acid polypeptide reads, in one-letter code: S-ribosylhomocysteine lyase (169 aa).

The Fe cation site is built by histidine 54, histidine 58, and cysteine 128.

Belongs to the LuxS family. Homodimer. Fe cation is required as a cofactor.

The catalysed reaction is S-(5-deoxy-D-ribos-5-yl)-L-homocysteine = (S)-4,5-dihydroxypentane-2,3-dione + L-homocysteine. Involved in the synthesis of autoinducer 2 (AI-2) which is secreted by bacteria and is used to communicate both the cell density and the metabolic potential of the environment. The regulation of gene expression in response to changes in cell density is called quorum sensing. Catalyzes the transformation of S-ribosylhomocysteine (RHC) to homocysteine (HC) and 4,5-dihydroxy-2,3-pentadione (DPD). The sequence is that of S-ribosylhomocysteine lyase from Shewanella baltica (strain OS223).